The primary structure comprises 189 residues: Protein OXIDATIVE STRESS 3 LIKE 2 (189 aa).

Disordered regions lie at residues 22-49 (SSSTSSDSIGENSDDDEGGENEIESSYN) and 128-147 (AMSQREGDSSSSGDDSLPTL). Residues 33–44 (NSDDDEGGENEI) are compositionally biased toward acidic residues.

The protein localises to the nucleus. This Arabidopsis thaliana (Mouse-ear cress) protein is Protein OXIDATIVE STRESS 3 LIKE 2.